The sequence spans 463 residues: Cytoplasmic 60S subunit biogenesis factor SPCC550.15c (463 aa).

C2H2-type zinc fingers lie at residues 5-30 and 70-94; these read FACTTCTVAFNNAESQKIHWKSDWHH and QNCEVCNKKFYSEGAYSSHMASKKH. Positions 109-136 are disordered; that stretch reads KLQSEDASSIASSTLSMGEPVVDSEIEE. Positions 113–124 are enriched in polar residues; sequence EDASSIASSTLS. Phosphoserine occurs at positions 150 and 155. The tract at residues 155–189 is disordered; the sequence is SLHGRESEPSKTELATSIPQSNEASKSHLFTQEPT. Residues 167 to 188 are compositionally biased toward polar residues; sequence ELATSIPQSNEASKSHLFTQEP. 2 consecutive C2H2-type zinc fingers follow at residues 208 to 231 and 259 to 283; these read RDCLFCAASFSSFDTCKKHMKASH and FTCLTCNREFKSLEAVRAHMQQKGH. A compositionally biased stretch (acidic residues) spans 317 to 338; it reads TVVEEDGSSGEGDWEDVSDDSD. 2 disordered regions span residues 317–341 and 444–463; these read TVVEEDGSSGEGDWEDVSDDSDNSS and ANKMGIKNNTKKHFRDALLQ.

The protein belongs to the REI1 family. As to quaternary structure, associates with nascent pre-60S particles that have not yet entered the translating pool, and is released from mature 60S subunits.

The protein resides in the cytoplasm. Its function is as follows. Pre-60S-associated factor involved in the cytoplasmic maturation of the 60S subunit. Involved in the dissociation and recycling of other late pre-60S factors before newly synthesized large ribosomal subunits enter translation. The chain is Cytoplasmic 60S subunit biogenesis factor SPCC550.15c from Schizosaccharomyces pombe (strain 972 / ATCC 24843) (Fission yeast).